The chain runs to 60 residues: Cytotoxin SP15a (60 aa).

4 disulfides stabilise this stretch: cysteine 3–cysteine 21, cysteine 14–cysteine 38, cysteine 42–cysteine 53, and cysteine 54–cysteine 59.

The protein belongs to the three-finger toxin family. Short-chain subfamily. Type IA cytotoxin sub-subfamily. Monomer in solution; Homodimer and oligomer in the presence of negatively charged lipids forming a pore with a size ranging between 20 and 30 Angstroms. Expressed by the venom gland.

The protein localises to the secreted. Its subcellular location is the target cell membrane. Its function is as follows. Shows cytolytic activity on many different cells by forming pore in lipid membranes. In vivo, increases heart rate or kills the animal by cardiac arrest. In addition, it binds to heparin with high affinity, interacts with Kv channel-interacting protein 1 (KCNIP1) in a calcium-independent manner, and binds to integrin alpha-V/beta-3 (ITGAV/ITGB3) with moderate affinity. The sequence is that of Cytotoxin SP15a from Naja atra (Chinese cobra).